We begin with the raw amino-acid sequence, 184 residues long: Peptidyl-tRNA hydrolase (184 aa).

Y14 provides a ligand contact to tRNA. Catalysis depends on H19, which acts as the Proton acceptor. TRNA contacts are provided by F64, N66, and N112.

The protein belongs to the PTH family. In terms of assembly, monomer.

It is found in the cytoplasm. The enzyme catalyses an N-acyl-L-alpha-aminoacyl-tRNA + H2O = an N-acyl-L-amino acid + a tRNA + H(+). In terms of biological role, hydrolyzes ribosome-free peptidyl-tRNAs (with 1 or more amino acids incorporated), which drop off the ribosome during protein synthesis, or as a result of ribosome stalling. Its function is as follows. Catalyzes the release of premature peptidyl moieties from peptidyl-tRNA molecules trapped in stalled 50S ribosomal subunits, and thus maintains levels of free tRNAs and 50S ribosomes. This chain is Peptidyl-tRNA hydrolase, found in Listeria innocua serovar 6a (strain ATCC BAA-680 / CLIP 11262).